A 548-amino-acid chain; its full sequence is Natural resistance-associated macrophage protein 1 (548 aa).

A disordered region spans residues 1–38 (MSGDTGPPKQGGTRYGSISSPPSPEPQQAPPGGTYLSE). Topologically, residues 1–55 (MSGDTGPPKQGGTRYGSISSPPSPEPQQAPPGGTYLSEKIPIPDTESGTFSLRKL) are cytoplasmic. The chain crosses the membrane as a helical span at residues 56-73 (WAFTGPGFLMSIAFLDPG). The Extracellular portion of the chain corresponds to 74-82 (NIESDLQAG). A helical transmembrane segment spans residues 83–102 (AVAGFKLLWVLLWATVLGLL). The Cytoplasmic portion of the chain corresponds to 103–139 (CQRLAARLGVVTGKDLGEVCHLYYPKVPRILLWLTIE). A helical membrane pass occupies residues 140–160 (LAIVGSDMQEVIGTAIAFSLL). The Extracellular portion of the chain corresponds to 161–164 (SAGR). Residues 165-184 (IPLWGGVLITVVDTFFFLFL) traverse the membrane as a helical segment. The Cytoplasmic portion of the chain corresponds to 185 to 193 (DNYGLRKLE). The helical transmembrane segment at 194-214 (AFFGFLITIMALTFGYEYVVA) threads the bilayer. Residues 215–237 (QPAQGALLQGLFLPSCPGCGQPE) lie on the Extracellular side of the membrane. A helical membrane pass occupies residues 238-256 (LLQAVGIIGAIIMPHNIYL). Residues 257–284 (HSSLVKSREVDRSRRADIREANMYFLIE) are Cytoplasmic-facing. The helical transmembrane segment at 285-304 (ATIALSVSFLINLFVMAVFG) threads the bilayer. At 305 to 346 (QAFYKQTNQAAFNICADSSLHDYAPIFPRNNLTVAVDIYQGG) the chain is on the extracellular side. Asparagine 335 carries N-linked (GlcNAc...) asparagine glycosylation. A helical membrane pass occupies residues 347-366 (VILGCLFGPPALYIWAVGLL). At 367–397 (AAGQSSTMTGTYAGQFVMEGFLKLRWSRFAR) the chain is on the cytoplasmic side. A helical membrane pass occupies residues 398-415 (VLLTRSCAILPTVLLAVF). The Extracellular portion of the chain corresponds to 416–426 (RDLRDLSGLND). Residues 427-447 (LLNVLQSLLLPFAVLPILTFT) form a helical membrane-spanning segment. The Cytoplasmic segment spans residues 448 to 463 (SMPALMQEFANGLVSK). The chain crosses the membrane as a helical span at residues 464–485 (VITSSIMVLVCAVNLYFVISYL). Over 486–493 (PSLPHPAY) the chain is Extracellular. A helical transmembrane segment spans residues 494–513 (FSLVALLAAAYLGLTTYLVW). The Cytoplasmic segment spans residues 514–548 (TCLITQGATLLAHSSHQRFLYGLPEEDQEKGRTSG).

It belongs to the NRAMP family.

The protein localises to the late endosome membrane. Its subcellular location is the lysosome membrane. It carries out the reaction Zn(2+)(in) + H(+)(out) = Zn(2+)(out) + H(+)(in). The catalysed reaction is Fe(2+)(in) + H(+)(out) = Fe(2+)(out) + H(+)(in). It catalyses the reaction Mn(2+)(in) + H(+)(out) = Mn(2+)(out) + H(+)(in). Its function is as follows. Macrophage-specific antiporter that fluxes metal ions in either direction against a proton gradient. Localized to late endosomal lysosomal membranes, delivers bivalent cations from the cytosol into these acidic compartments where they may directly affect antimicrobial activity. Involved in iron metabolism and host natural resistance to infection with intracellular parasites. Pathogen resistance involves sequestration of Fe(2+) and Mn(2+), cofactors of both prokaryotic and eukaryotic catalases and superoxide dismutases, not only to protect the macrophage against its own generation of reactive oxygen species, but to deny the cations to the pathogen for synthesis of its protective enzymes. The sequence is that of Natural resistance-associated macrophage protein 1 (SLC11A1) from Bos taurus (Bovine).